The following is a 288-amino-acid chain: Quinate/shikimate dehydrogenase (288 aa).

Residues lysine 71 and aspartate 107 each coordinate substrate. NAD(+) is bound by residues 132 to 135, 155 to 158, lysine 205, 232 to 235, and glycine 255; these read AGGA, NRRD, and CVYN.

It belongs to the shikimate dehydrogenase family. As to quaternary structure, homodimer.

The enzyme catalyses L-quinate + NAD(+) = 3-dehydroquinate + NADH + H(+). It catalyses the reaction L-quinate + NADP(+) = 3-dehydroquinate + NADPH + H(+). The catalysed reaction is shikimate + NADP(+) = 3-dehydroshikimate + NADPH + H(+). It carries out the reaction shikimate + NAD(+) = 3-dehydroshikimate + NADH + H(+). The protein operates within metabolic intermediate biosynthesis; chorismate biosynthesis; chorismate from D-erythrose 4-phosphate and phosphoenolpyruvate: step 4/7. In terms of biological role, the actual biological function of YdiB remains unclear, nor is it known whether 3-dehydroshikimate or quinate represents the natural substrate. Catalyzes the reversible NAD-dependent reduction of both 3-dehydroshikimate (DHSA) and 3-dehydroquinate to yield shikimate (SA) and quinate, respectively. It can use both NAD or NADP for catalysis, however it has higher catalytic efficiency with NAD. In Escherichia coli O1:K1 / APEC, this protein is Quinate/shikimate dehydrogenase.